The chain runs to 406 residues: Arginine biosynthesis bifunctional protein ArgJ (406 aa).

Threonine 152, lysine 179, threonine 190, glutamate 277, asparagine 401, and serine 406 together coordinate substrate. The Nucleophile role is filled by threonine 190.

The protein belongs to the ArgJ family. In terms of assembly, heterotetramer of two alpha and two beta chains.

The protein resides in the cytoplasm. It carries out the reaction N(2)-acetyl-L-ornithine + L-glutamate = N-acetyl-L-glutamate + L-ornithine. The enzyme catalyses L-glutamate + acetyl-CoA = N-acetyl-L-glutamate + CoA + H(+). Its pathway is amino-acid biosynthesis; L-arginine biosynthesis; L-ornithine and N-acetyl-L-glutamate from L-glutamate and N(2)-acetyl-L-ornithine (cyclic): step 1/1. The protein operates within amino-acid biosynthesis; L-arginine biosynthesis; N(2)-acetyl-L-ornithine from L-glutamate: step 1/4. Catalyzes two activities which are involved in the cyclic version of arginine biosynthesis: the synthesis of N-acetylglutamate from glutamate and acetyl-CoA as the acetyl donor, and of ornithine by transacetylation between N(2)-acetylornithine and glutamate. This Neisseria gonorrhoeae (strain ATCC 700825 / FA 1090) protein is Arginine biosynthesis bifunctional protein ArgJ.